Here is a 207-residue protein sequence, read N- to C-terminus: High frequency lysogenization protein HflD homolog (207 aa).

It belongs to the HflD family.

It localises to the cytoplasm. The protein localises to the cell inner membrane. The chain is High frequency lysogenization protein HflD homolog from Pseudomonas fluorescens (strain SBW25).